The sequence spans 677 residues: Amine oxidase [copper-containing] alpha 2, peroxisomal (677 aa).

Position 320 to 331 (320 to 331 (YLDCGEFGCGQT)) interacts with substrate. Aspartate 322 serves as the catalytic Proton acceptor. Cysteine 341 and cysteine 367 form a disulfide bridge. Substrate is bound at residue 407–412 (VGNYDY). Tyrosine 410 serves as the catalytic Schiff-base intermediate with substrate; via topaquinone. Position 410 is a 2',4',5'-topaquinone (tyrosine 410). Cu cation is bound by residues histidine 466 and histidine 468. Aspartate 477, aspartate 617, and isoleucine 618 together coordinate Mn(2+). Residue histidine 628 coordinates Cu cation.

Belongs to the copper/topaquinone oxidase family. Homodimer. Cu cation is required as a cofactor. It depends on Zn(2+) as a cofactor. The cofactor is L-topaquinone. Topaquinone (TPQ) is generated by copper-dependent autoxidation of a specific tyrosyl residue. Expressed exclusively in leaves.

It localises to the peroxisome. The enzyme catalyses a primary methyl amine + O2 + H2O = an aldehyde + H2O2 + NH4(+). Its pathway is amine and polyamine degradation; putrescine degradation. Its function is as follows. Copper amine oxidase that can use putrescine and spermidine as substrates. Involved in putrescine catabolism in peroxisomes in response to salt stress. Regulates arginine-dependent nitric oxide (NO) production, a key signaling molecule regulating a wide range of physiological processes including responses to salt stress, by influencing arginine bioavailability. Modulates primary root growth. In Arabidopsis thaliana (Mouse-ear cress), this protein is Amine oxidase [copper-containing] alpha 2, peroxisomal.